Reading from the N-terminus, the 331-residue chain is Ribosomal RNA small subunit methyltransferase H (331 aa).

Residues 49–51 (GGH), aspartate 68, leucine 102, aspartate 116, and glutamine 123 contribute to the S-adenosyl-L-methionine site.

This sequence belongs to the methyltransferase superfamily. RsmH family.

It localises to the cytoplasm. The enzyme catalyses cytidine(1402) in 16S rRNA + S-adenosyl-L-methionine = N(4)-methylcytidine(1402) in 16S rRNA + S-adenosyl-L-homocysteine + H(+). Specifically methylates the N4 position of cytidine in position 1402 (C1402) of 16S rRNA. The protein is Ribosomal RNA small subunit methyltransferase H of Renibacterium salmoninarum (strain ATCC 33209 / DSM 20767 / JCM 11484 / NBRC 15589 / NCIMB 2235).